The primary structure comprises 200 residues: ATP-dependent Clp protease proteolytic subunit (200 aa).

Catalysis depends on Ser-103, which acts as the Nucleophile. His-128 is a catalytic residue.

Belongs to the peptidase S14 family. In terms of assembly, fourteen ClpP subunits assemble into 2 heptameric rings which stack back to back to give a disk-like structure with a central cavity, resembling the structure of eukaryotic proteasomes.

The protein localises to the cytoplasm. The catalysed reaction is Hydrolysis of proteins to small peptides in the presence of ATP and magnesium. alpha-casein is the usual test substrate. In the absence of ATP, only oligopeptides shorter than five residues are hydrolyzed (such as succinyl-Leu-Tyr-|-NHMec, and Leu-Tyr-Leu-|-Tyr-Trp, in which cleavage of the -Tyr-|-Leu- and -Tyr-|-Trp bonds also occurs).. Functionally, cleaves peptides in various proteins in a process that requires ATP hydrolysis. Has a chymotrypsin-like activity. Plays a major role in the degradation of misfolded proteins. This is ATP-dependent Clp protease proteolytic subunit from Vibrio cholerae serotype O1 (strain ATCC 39541 / Classical Ogawa 395 / O395).